Consider the following 152-residue polypeptide: MTSTVTTTVGCGGLPVRPLSTATRGRPRRCAVRAQAAGADASNDKSVEVMRKFSEQYARRSNTFFCADKTVTAVVIKGLADHRDTLGAPLCPCRHYDDKAAEVAQGFWNCPCVPMRERKECHCMLFLTPDNDFAGKDQVISFEEIKEATSKF.

A chloroplast-targeting transit peptide spans 1–38 (MTSTVTTTVGCGGLPVRPLSTATRGRPRRCAVRAQAAG). Residue cysteine 91 participates in [4Fe-4S] cluster binding. Residue cysteine 93 is the Nucleophile of the active site. Cysteine 93 and cysteine 123 are oxidised to a cystine. The [4Fe-4S] cluster site is built by cysteine 110, cysteine 112, and cysteine 121.

It belongs to the ferredoxin thioredoxin reductase beta subunit family. In terms of assembly, heterodimer of subunit A (variable subunit) and subunit B (catalytic subunit). Heterodimeric FTR forms a complex with ferredoxin and thioredoxin. Requires [4Fe-4S] cluster as cofactor.

It localises to the plastid. The protein localises to the chloroplast. It carries out the reaction [thioredoxin]-disulfide + 2 reduced [2Fe-2S]-[ferredoxin] + 2 H(+) = [thioredoxin]-dithiol + 2 oxidized [2Fe-2S]-[ferredoxin]. Functionally, catalytic subunit of the ferredoxin-thioredoxin reductase (FTR), which catalyzes the two-electron reduction of thioredoxins by the electrons provided by reduced ferredoxin. This is Ferredoxin-thioredoxin reductase catalytic chain, chloroplastic (FTRC) from Zea mays (Maize).